The chain runs to 522 residues: 3-octaprenyl-4-hydroxybenzoate carboxy-lyase (522 aa).

A Mn(2+)-binding site is contributed by Asn-181. Prenylated FMN contacts are provided by residues 184-186 (IYR), 198-200 (RWL), and 203-204 (RG). Glu-247 lines the Mn(2+) pocket. Asp-322 serves as the catalytic Proton donor.

This sequence belongs to the UbiD family. As to quaternary structure, homohexamer. It depends on prenylated FMN as a cofactor. Requires Mn(2+) as cofactor.

It is found in the cell membrane. The catalysed reaction is a 4-hydroxy-3-(all-trans-polyprenyl)benzoate + H(+) = a 2-(all-trans-polyprenyl)phenol + CO2. It participates in cofactor biosynthesis; ubiquinone biosynthesis. Its function is as follows. Catalyzes the decarboxylation of 3-octaprenyl-4-hydroxy benzoate to 2-octaprenylphenol, an intermediate step in ubiquinone biosynthesis. This chain is 3-octaprenyl-4-hydroxybenzoate carboxy-lyase, found in Paraburkholderia xenovorans (strain LB400).